A 73-amino-acid polypeptide reads, in one-letter code: Antimicrobial peptide TsAP-2 (73 aa).

The N-terminal stretch at 1–22 is a signal peptide; the sequence is MQIKHLITIFFLVLIVADHCHA. Lys39 is subject to Lysine amide. The propeptide occupies 45–73; it reads EITSQIEQYRNLQKREAELENLLANLPVY.

Belongs to the non-disulfide-bridged peptide (NDBP) superfamily. Short antimicrobial peptide (group 4) family. In terms of tissue distribution, expressed by the venom gland.

The protein localises to the secreted. Functionally, antimicrobial peptide. Has a high antibacterial activity against the Gram-positive bacterium S.aureus (MIC=5-17.30 uM), the methicillin-resistant S.aureus (MRSA) (MIC=17.30 uM), and E.faecalis (MIC=69.23 uM). Has antifungal activity against Candida spp. and one Cryptococcus neoformans strains with MICs values ranging from 6.25 to 100 uM. Also shows an inhibitory activity on C.albicans biofilms at high concentrations. Has a moderate hemolytic potency (18% at 20 uM). Also inhibits the growth of the five human cancer cell lines tested (the squamous carcinoma cell line H157 (IC(50)=4.1 uM), the lung adenocarcinoma cell line H838 (11.0 uM), the breast carcinoma cell line MCF-7 (6.4 uM), the androgen-independent prostate adenocarcinoma cell line PC3 (13.3 uM) and the glioblastoma cell line U251-MG (15.4 uM)). In the model of polymicrobial sepsis, it exhibits an antibiotic effect, reducing the levels of microorganisms in the infectious focus and the inflammatory responses in the lung and cecum of septic animals. The sequence is that of Antimicrobial peptide TsAP-2 from Tityus serrulatus (Brazilian scorpion).